The chain runs to 322 residues: Protein farnesyltransferase/geranylgeranyltransferase type-1 subunit alpha (322 aa).

The segment at 1–27 (MSSSEEDDGYVPFSKRPEWSDVKPLAQ) is disordered. PFTA repeat units follow at residues 62–95 (RVLD…EQDE), 103–136 (QEMN…IGSD), 138–171 (KEKE…RDWN), 173–205 (ELAM…NPSP), 213–246 (REVE…KIST), and 287–321 (NSLN…LKLI).

It belongs to the protein prenyltransferase subunit alpha family. As to quaternary structure, heterodimer of fntA and fntB (farnesyltransferase). Heterodimer of an alpha and a beta subunit. Mg(2+) serves as cofactor.

It catalyses the reaction L-cysteinyl-[protein] + (2E,6E)-farnesyl diphosphate = S-(2E,6E)-farnesyl-L-cysteinyl-[protein] + diphosphate. The enzyme catalyses geranylgeranyl diphosphate + L-cysteinyl-[protein] = S-geranylgeranyl-L-cysteinyl-[protein] + diphosphate. Functionally, catalyzes the transfer of a farnesyl or geranyl-geranyl moiety from farnesyl or geranyl-geranyl diphosphate to a cysteine at the fourth position from the C-terminus of several proteins having the C-terminal sequence Cys-aliphatic-aliphatic-X. The alpha subunit is thought to participate in a stable complex with the substrate. The beta subunit binds the peptide substrate. The chain is Protein farnesyltransferase/geranylgeranyltransferase type-1 subunit alpha (fntA) from Dictyostelium discoideum (Social amoeba).